A 460-amino-acid polypeptide reads, in one-letter code: ATP synthase subunit beta (460 aa).

150–157 (GGAGVGKT) provides a ligand contact to ATP.

It belongs to the ATPase alpha/beta chains family. F-type ATPases have 2 components, CF(1) - the catalytic core - and CF(0) - the membrane proton channel. CF(1) has five subunits: alpha(3), beta(3), gamma(1), delta(1), epsilon(1). CF(0) has three main subunits: a(1), b(2) and c(9-12). The alpha and beta chains form an alternating ring which encloses part of the gamma chain. CF(1) is attached to CF(0) by a central stalk formed by the gamma and epsilon chains, while a peripheral stalk is formed by the delta and b chains.

It is found in the cell inner membrane. It catalyses the reaction ATP + H2O + 4 H(+)(in) = ADP + phosphate + 5 H(+)(out). In terms of biological role, produces ATP from ADP in the presence of a proton gradient across the membrane. The catalytic sites are hosted primarily by the beta subunits. This is ATP synthase subunit beta from Salmonella gallinarum (strain 287/91 / NCTC 13346).